A 509-amino-acid chain; its full sequence is Heat shock 70 kDa protein 14-A (509 aa).

This sequence belongs to the heat shock protein 70 family. In terms of assembly, component of ribosome-associated complex (RAC).

The protein localises to the cytoplasm. It localises to the cytosol. Its function is as follows. Component of the ribosome-associated complex (RAC), a complex involved in folding or maintaining nascent polypeptides in a folding-competent state. This is Heat shock 70 kDa protein 14-A (hspa14-a) from Xenopus laevis (African clawed frog).